A 698-amino-acid chain; its full sequence is Quillaic acid 3-O-glycosyltransferase CSL1 (698 aa).

The chain crosses the membrane as a helical span at residues 14-34 (ALLSRLHILFHSALVASVFYY). A glycan (N-linked (GlcNAc...) asparagine) is linked at asparagine 38. The helical transmembrane segment at 42-62 (GPAWALMTFAELTLAFIWALT) threads the bilayer. Residues lysine 99 and glutamate 100 each coordinate UDP-alpha-D-glucose. Residue aspartate 129 is part of the active site. Asparagine 317 is a glycosylation site (N-linked (GlcNAc...) asparagine). Serine 436 is an active-site residue. Helical transmembrane passes span 478–498 (WTSG…YAMS), 508–528 (YAYF…GVVL), 546–566 (WLLA…YEVL), 581–601 (IWII…MLNK), 636–656 (MFMV…FGGL), and 669–689 (FAQL…MEEI).

The protein belongs to the glycosyltransferase 2 family. Plant cellulose synthase-like G subfamily. Mainly expressed in flowers and flower buds and, to a lesser extent, in leaves, stems and roots.

Its subcellular location is the golgi apparatus membrane. The protein operates within secondary metabolite biosynthesis; terpenoid biosynthesis. Functionally, component of the oleanane-type triterpene saponins (e.g. saponarioside A and saponarioside B) biosynthetic pathway, leading to the production of natural products with detergent properties used as traditional sources of soap. Glycosyltransferase that mediates the conversion of quillaic acid (QA) to QA-mono via the initiation of the C-3 sugar chain. The protein is Quillaic acid 3-O-glycosyltransferase CSL1 of Saponaria officinalis (Common soapwort).